Reading from the N-terminus, the 242-residue chain is DNA repair protein RecO (242 aa).

It belongs to the RecO family. In terms of assembly, monomer.

Functionally, involved in DNA repair and RecF pathway recombination. This chain is DNA repair protein RecO, found in Salmonella agona (strain SL483).